The chain runs to 477 residues: MTTQLQHARGGTVTDAMERVAERENRDAEFVRQQVADGQAVIPANHGHDALDPMIIGREFATKVNANIGNSEPASGPEAELQKLHTAVHYGADTVMDLSTGGDLDTIRTENIAYSPVPVGTVPIYEAVTRVDDASDLTPELLLDVVEKQAEQGVDYMTLHAGVLAEHLPLTDGRTTGIVSRGGSILARWMEEHGEQNPLYERFDDLCEILAAYDVTVSLGDGLRPGSLADASDAAQFAELDTLGELTRRAWDHGVQVMVEGPGHVPMDEIADNVERQQDVCDGAPFYVLGPLVTDVAPGYDHITSAIGATEAARAGAAMLCYVTPKEHLGLPDAEDVRDGLAAYRIAAHSADVANGRPGARDWDDAVSEARYAFDWRRQFELALDPGRARNYHDQTLPEDNYKEARFCSMCGVEFCSMRIDQDAREAGDGMDGLESRTDLDSSAAAAVNRPPTGVHRAEKLDDIPCPVAEDDVAADD.

Substrate-binding positions include Asn67, Met96, Tyr125, His160, 180-182 (SRG), 221-224 (DGLR), and Glu260. His264 serves as a coordination point for Zn(2+). Tyr287 serves as a coordination point for substrate. His328 contacts Zn(2+). [4Fe-4S] cluster contacts are provided by Cys408, Cys411, and Cys416. Residues 427-440 (AGDGMDGLESRTDL) show a composition bias toward basic and acidic residues. Residues 427–477 (AGDGMDGLESRTDLDSSAAAAVNRPPTGVHRAEKLDDIPCPVAEDDVAADD) are disordered.

This sequence belongs to the ThiC family. The cofactor is [4Fe-4S] cluster.

It carries out the reaction 5-amino-1-(5-phospho-beta-D-ribosyl)imidazole + S-adenosyl-L-methionine = 4-amino-2-methyl-5-(phosphooxymethyl)pyrimidine + CO + 5'-deoxyadenosine + formate + L-methionine + 3 H(+). Its pathway is cofactor biosynthesis; thiamine diphosphate biosynthesis. Catalyzes the synthesis of the hydroxymethylpyrimidine phosphate (HMP-P) moiety of thiamine from aminoimidazole ribotide (AIR) in a radical S-adenosyl-L-methionine (SAM)-dependent reaction. This is Phosphomethylpyrimidine synthase from Natronomonas pharaonis (strain ATCC 35678 / DSM 2160 / CIP 103997 / JCM 8858 / NBRC 14720 / NCIMB 2260 / Gabara) (Halobacterium pharaonis).